The sequence spans 1534 residues: Slit homolog 1 protein (1534 aa).

The N-terminal stretch at 1–33 (MALTPGWGSSAGPVRPELWLLLWAAAWRLGASA) is a signal peptide. The LRRNT domain occupies 34–61 (CPALCTCTGTTVDCHGTGLQAIPKNIPR). 6 LRR repeats span residues 62-83 (NTERLELNGNNITRIHKNDFAG), 86-107 (QLRVLQLMENQIGAVERGAFDD), 110-131 (ELERLRLNRNQLHMLPELLFQN), 134-155 (ALSRLDLSENAIQAIPRKAFRG), 158-179 (DLKNLQLDKNQISCIEEGAFRA), and 182-203 (GLEVLTLNNNNITTIPVSSFNH). N-linked (GlcNAc...) asparagine glycosylation occurs at N72. An N-linked (GlcNAc...) asparagine glycan is attached at N192. In terms of domain architecture, LRRCT 1 spans 215–265 (NHLFCDCHLAWLSQWLRQRPTIGLFTQCSGPASLRGLNVAEVQKSEFSCSG). The LRRNT 2 domain occupies 273 to 309 (PTCTLSSGSCPAMCTCSNGIVDCRGKGLTAIPANLPE). C286 and C295 are joined by a disulfide. 5 LRR repeats span residues 310 to 331 (TMTEIRLELNGIKSIPPGAFSP), 334 to 355 (KLRRIDLSNNQIAEIAPDAFQG), 358 to 379 (SLNSLVLYGNKITDLPRGVFGG), 382 to 403 (TLQLLLLNANKINCIRPDAFQD), and 406 to 427 (NLSLLSLYDNKIQSLAKGTFTS). A glycan (N-linked (GlcNAc...) asparagine) is linked at N406. The LRRCT 2 domain maps to 439–489 (NPFICDCNLKWLADFLRTNPIETSGARCASPRRLANKRIGQIKSKKFRCSA). 4 disulfides stabilise this stretch: C443–C466, C445–C487, C513–C519, and C517–C526. An LRRNT 3 domain is found at 504–540 (NSECNSDVVCPHKCRCEANVVECSSLKLTKIPERIPQ). LRR repeat units follow at residues 541–562 (STAELRLNNNEISILEATGMFK), 566–587 (HLKKINLSNNKVSEIEDGAFEG), 590–611 (SVSELHLTANQLESIRSGMFRG), 614–635 (GLRTLMLRNNRISCIHNDSFTG), and 638–659 (NVRLLSLYDNQITTVSPGAFDT). N-linked (GlcNAc...) asparagine glycosylation occurs at N571. N-linked (GlcNAc...) asparagine glycosylation occurs at N630. The 51-residue stretch at 671–721 (NPFNCNCQLAWLGGWLRKRKIVTGNPRCQNPDFLRQIPLQDVAFPDFRCEE) folds into the LRRCT 3 domain. 2 disulfide bridges follow: C675/C698 and C677/C719. The LRRNT 4 domain maps to 725–761 (EGGCLPRPQCPQECACLDTVVRCSNKHLRALPKGIPK). 3 N-linked (GlcNAc...) asparagine glycosylation sites follow: N762, N801, and N806. LRR repeat units follow at residues 762–783 (NVTELYLDGNQFTLVPGQLSTF), 785–806 (YLQLVDLSNNKISSLSNSSFTN), 809–830 (QLTTLILSYNALQCIPPLAFQG), and 833–854 (SLRLLSLHGNDISTLQEGIFAD). In terms of domain architecture, LRRCT 4 spans 866–916 (NPLYCDCHLRWLSSWVKTGYKEPGIARCAGPQDMEGKLLLTTPAKKFECQG). EGF-like domains lie at 927 to 962 (DLCLSSPCQNQGTCHNDPLEVYRCACPSGYKGRDCE), 964 to 1003 (SLDSCSSGPCENGGTCHAQEGEDAPFTCSCPTGFEGPTCG), 1005 to 1041 (NTDDCVDHACANGGVCVDGVGNYTCQCPLQYEGKACE), 1043 to 1081 (LVDLCSPDLNPCQHEAQCVGTPDGPRCECMPGYAGDNCS), 1083 to 1119 (NQDDCRDHRCQNGAQCMDEVNSYSCLCAEGYSGQLCE), and 1127 to 1163 (PKSPCEGTECQNGANCVDQGNRPVCQCLPGFGGPECE). 18 cysteine pairs are disulfide-bonded: C929/C940, C934/C950, C952/C961, C968/C979, C973/C991, C993/C1002, C1009/C1020, C1014/C1029, C1031/C1040, C1047/C1060, C1054/C1069, C1071/C1080, C1087/C1098, C1092/C1107, C1109/C1118, C1131/C1142, C1136/C1151, and C1153/C1162. A glycan (N-linked (GlcNAc...) asparagine) is linked at N1026. N1079 carries N-linked (GlcNAc...) asparagine glycosylation. The Laminin G-like domain occupies 1166–1339 (LSVNFVDRDT…QMKPGVVPGC (174 aa)). N1189, N1259, and N1306 each carry an N-linked (GlcNAc...) asparagine glycan. 14 disulfides stabilise this stretch: C1313-C1339, C1342-C1352, C1347-C1362, C1364-C1373, C1381-C1391, C1386-C1401, C1403-C1412, C1422-C1432, C1427-C1442, C1444-C1453, C1459-C1498, C1477-C1512, C1488-C1528, and C1492-C1530. EGF-like domains are found at residues 1340 to 1374 (EPCRKLYCLHGICQPNATPGPMCHCEAGWVGLHCD), 1377 to 1413 (ADGPCHGHKCVHGQCVPLDALSYSCQCQDGYSGALCN), and 1418 to 1454 (LAEPCRGLQCLHGHCQASGTKGAHCVCDPGFSGELCE). One can recognise a CTCK domain in the interval 1459-1534 (CRGDPVRDFH…PTKCGCALCA (76 aa)).

Interacts with ROBO1 and GREM1. In terms of tissue distribution, predominantly expressed in adult forebrain. Expressed in fetal brain, lung and kidney.

The protein resides in the secreted. Thought to act as molecular guidance cue in cellular migration, and function appears to be mediated by interaction with roundabout homolog receptors. During neural development involved in axonal navigation at the ventral midline of the neural tube and projection of axons to different regions. SLIT1 and SLIT2 together seem to be essential for midline guidance in the forebrain by acting as repulsive signal preventing inappropriate midline crossing by axons projecting from the olfactory bulb. This chain is Slit homolog 1 protein (SLIT1), found in Homo sapiens (Human).